A 234-amino-acid polypeptide reads, in one-letter code: Peptidase E (234 aa).

Active-site charge relay system residues include S123, D138, and H160.

The protein belongs to the peptidase S51 family.

It is found in the cytoplasm. The catalysed reaction is Dipeptidase E catalyzes the hydrolysis of dipeptides Asp-|-Xaa. It does not act on peptides with N-terminal Glu, Asn or Gln, nor does it cleave isoaspartyl peptides.. Its function is as follows. Hydrolyzes dipeptides containing N-terminal aspartate residues. May play a role in allowing the cell to use peptide aspartate to spare carbon otherwise required for the synthesis of the aspartate family of amino acids. The polypeptide is Peptidase E (Actinobacillus pleuropneumoniae serotype 3 (strain JL03)).